Consider the following 673-residue polypeptide: UvrABC system protein C (673 aa).

Positions 16–95 constitute a GIY-YIG domain; sequence VEPGVYKFRD…IKEFDPRFNV (80 aa). The region spanning 208 to 243 is the UVR domain; sequence DKMVRELERRMHAAAEDLDFETAARLRDDVQALRRA. The tract at residues 488–526 is disordered; that stretch reads RDEAERDELDGTAAGAPLVDDDETPTSRPGIDPTTGRPR.

This sequence belongs to the UvrC family. As to quaternary structure, interacts with UvrB in an incision complex.

The protein localises to the cytoplasm. In terms of biological role, the UvrABC repair system catalyzes the recognition and processing of DNA lesions. UvrC both incises the 5' and 3' sides of the lesion. The N-terminal half is responsible for the 3' incision and the C-terminal half is responsible for the 5' incision. The sequence is that of UvrABC system protein C from Nocardia farcinica (strain IFM 10152).